The primary structure comprises 375 residues: DNA replication and repair protein RecF (375 aa).

Position 30 to 37 (30 to 37) interacts with ATP; the sequence is GDNAQGKS.

This sequence belongs to the RecF family.

It localises to the cytoplasm. Its function is as follows. The RecF protein is involved in DNA metabolism; it is required for DNA replication and normal SOS inducibility. RecF binds preferentially to single-stranded, linear DNA. It also seems to bind ATP. The protein is DNA replication and repair protein RecF of Gloeobacter violaceus (strain ATCC 29082 / PCC 7421).